The following is a 324-amino-acid chain: Arginase (324 aa).

4 residues coordinate Mn(2+): histidine 115, aspartate 142, histidine 144, and aspartate 146. Residues histidine 144–histidine 148, serine 155–asparagine 157, and aspartate 196 contribute to the substrate site. The Mn(2+) site is built by aspartate 244 and aspartate 246. Substrate contacts are provided by threonine 258 and glutamate 289.

It belongs to the arginase family. As to quaternary structure, homohexamer. Mn(2+) is required as a cofactor.

It catalyses the reaction L-arginine + H2O = urea + L-ornithine. Its pathway is nitrogen metabolism; urea cycle; L-ornithine and urea from L-arginine: step 1/1. This is Arginase (arcA) from Agrobacterium fabrum (strain C58 / ATCC 33970) (Agrobacterium tumefaciens (strain C58)).